The following is a 1164-amino-acid chain: DNA-directed RNA polymerase 132 kDa polypeptide (1164 aa).

The protein belongs to the RNA polymerase beta chain family. The DNA-dependent RNA polymerase used for intermediate and late genes expression consists of eight subunits (147) kDa, (133) kDa, (35) kDa, (30) kDa, (22) kDa, (19) kDa, (18) kDa and (7) kDa totalling more than 500 kDa in mass. The same holoenzyme, with the addition of the transcription-specificity factor RAP94, is used for early gene expression.

It is found in the virion. It carries out the reaction RNA(n) + a ribonucleoside 5'-triphosphate = RNA(n+1) + diphosphate. Its function is as follows. Part of the DNA-dependent RNA polymerase which catalyzes the transcription of viral DNA into RNA using the four ribonucleoside triphosphates as substrates. Responsible for the transcription of early, intermediate and late genes. DNA-dependent RNA polymerase associates with the early transcription factor (ETF), itself composed of D6 and A7, thereby allowing the early genes transcription. Late transcription, and probably also intermediate transcription, require newly synthesized RNA polymerase. In Mus musculus (Mouse), this protein is DNA-directed RNA polymerase 132 kDa polypeptide (RPO132).